The chain runs to 478 residues: Dynein regulatory complex subunit 4 (478 aa).

Residues 1–12 (MAPKKKGKKGKA) are compositionally biased toward basic residues. A disordered region spans residues 1 to 29 (MAPKKKGKKGKAKGTAIVDGVAPEDMTKE). The regulates microtubule-binding stretch occupies residues 1–114 (MAPKKKGKKG…LLYEHQNNLA (114 aa)). 2 coiled-coil regions span residues 24–207 (EDMT…RKTE) and 242–426 (LNNL…ELAR). The interval 115-258 (EVKAEGTVVM…NSLKEQMEDM (144 aa)) is microtubule-binding. The interval 357-478 (QQKTGFKNLL…GPAGLVGAPT (122 aa)) is interaction with SMO.

The protein belongs to the DRC4 family. Component of the nexin-dynein regulatory complex (N-DRC). Interacts with microtubules. Interacts with SMO. Interacts (via coiled-coil domains) with RAB3B (in GTP-bound form). Interacts with DRC1. Interacts with DRC7. Highly expressed in adult testes and lung. Weakly or not expressed in other tested tissues.

The protein resides in the cytoplasm. It is found in the cytoskeleton. Its subcellular location is the cell projection. It localises to the cilium. The protein localises to the flagellum. The protein resides in the cilium axoneme. It is found in the cilium basal body. Its subcellular location is the golgi apparatus. It localises to the flagellum axoneme. In terms of biological role, component of the nexin-dynein regulatory complex (N-DRC), a key regulator of ciliary/flagellar motility which maintains the alignment and integrity of the distal axoneme and regulates microtubule sliding in motile axonemes. Plays an important role in the assembly of the N-DRC linker. Plays dual roles at both the primary (or non-motile) cilia to regulate hedgehog signaling and in motile cilia to coordinate cilia movement. Required for proper motile cilia functioning. Positively regulates ciliary smoothened (SMO)-dependent Hedgehog (Hh) signaling pathway by facilitating the trafficking of SMO into the cilium and the stimulation of SMO activity in a GRK2-dependent manner. May play a role in the spermatozoa motility. The protein is Dynein regulatory complex subunit 4 (Gas8) of Mus musculus (Mouse).